The chain runs to 247 residues: MAGHSKWANIKRHKWAQDAKRSKIFTKHIREITVAARLGGPDPEMNARLRLALDRAFAVNLPKDRADAAIKKGAGLEEAEAYEEIRYEGYGPGGSAIMVDCMTDNRNRTVSEVRHAFSKHGGKMGTDNSVAYLFQERGVLVFAPGTDSDQVLEVALEAGADDLVENDDGSLEVLTTPEAYRGVRDALTEAGLEPEQADVTQRPDLTVQIEGDNAVSTARLIERLEDLDDVQHVYTNADLPAEAYEEG.

The protein belongs to the TACO1 family.

It localises to the cytoplasm. This chain is Probable transcriptional regulatory protein Hhal_2210, found in Halorhodospira halophila (strain DSM 244 / SL1) (Ectothiorhodospira halophila (strain DSM 244 / SL1)).